A 181-amino-acid polypeptide reads, in one-letter code: Adenine phosphoribosyltransferase (181 aa).

It belongs to the purine/pyrimidine phosphoribosyltransferase family. In terms of assembly, homodimer.

It localises to the cytoplasm. The catalysed reaction is AMP + diphosphate = 5-phospho-alpha-D-ribose 1-diphosphate + adenine. The protein operates within purine metabolism; AMP biosynthesis via salvage pathway; AMP from adenine: step 1/1. Its function is as follows. Catalyzes a salvage reaction resulting in the formation of AMP, that is energically less costly than de novo synthesis. The sequence is that of Adenine phosphoribosyltransferase from Neorhizobium galegae (Rhizobium galegae).